The sequence spans 116 residues: Aspartate 1-decarboxylase (116 aa).

The active-site Schiff-base intermediate with substrate; via pyruvic acid is the serine 25. At serine 25 the chain carries Pyruvic acid (Ser). Substrate is bound at residue threonine 57. Residue tyrosine 58 is the Proton donor of the active site. 73–75 is a binding site for substrate; that stretch reads GAA.

Belongs to the PanD family. As to quaternary structure, heterooctamer of four alpha and four beta subunits. It depends on pyruvate as a cofactor. Is synthesized initially as an inactive proenzyme, which is activated by self-cleavage at a specific serine bond to produce a beta-subunit with a hydroxyl group at its C-terminus and an alpha-subunit with a pyruvoyl group at its N-terminus.

Its subcellular location is the cytoplasm. It catalyses the reaction L-aspartate + H(+) = beta-alanine + CO2. Its pathway is cofactor biosynthesis; (R)-pantothenate biosynthesis; beta-alanine from L-aspartate: step 1/1. Its function is as follows. Catalyzes the pyruvoyl-dependent decarboxylation of aspartate to produce beta-alanine. This chain is Aspartate 1-decarboxylase, found in Parabacteroides distasonis (strain ATCC 8503 / DSM 20701 / CIP 104284 / JCM 5825 / NCTC 11152).